We begin with the raw amino-acid sequence, 518 residues long: Membrane-bound lytic murein transglycosylase F (518 aa).

The N-terminal stretch at 1 to 21 (MKKLKINYLFIGILALLLAVA) is a signal peptide. A non-LT domain region spans residues 22–269 (LWPSIPWFGK…RIEEKYLGHG (248 aa)). An LT domain region spans residues 270–518 (DDFDYVDTRT…SRKGSEEKQN (249 aa)). The active site involves Glu314.

It in the N-terminal section; belongs to the bacterial solute-binding protein 3 family. The protein in the C-terminal section; belongs to the transglycosylase Slt family.

The protein resides in the cell outer membrane. The enzyme catalyses Exolytic cleavage of the (1-&gt;4)-beta-glycosidic linkage between N-acetylmuramic acid (MurNAc) and N-acetylglucosamine (GlcNAc) residues in peptidoglycan, from either the reducing or the non-reducing ends of the peptidoglycan chains, with concomitant formation of a 1,6-anhydrobond in the MurNAc residue.. In terms of biological role, murein-degrading enzyme that degrades murein glycan strands and insoluble, high-molecular weight murein sacculi, with the concomitant formation of a 1,6-anhydromuramoyl product. Lytic transglycosylases (LTs) play an integral role in the metabolism of the peptidoglycan (PG) sacculus. Their lytic action creates space within the PG sacculus to allow for its expansion as well as for the insertion of various structures such as secretion systems and flagella. The chain is Membrane-bound lytic murein transglycosylase F from Shigella boydii serotype 18 (strain CDC 3083-94 / BS512).